An 877-amino-acid chain; its full sequence is Alanine--tRNA ligase (877 aa).

Zn(2+)-binding residues include His-565, His-569, Cys-667, and His-671.

It belongs to the class-II aminoacyl-tRNA synthetase family. Zn(2+) serves as cofactor.

It localises to the cytoplasm. The catalysed reaction is tRNA(Ala) + L-alanine + ATP = L-alanyl-tRNA(Ala) + AMP + diphosphate. In terms of biological role, catalyzes the attachment of alanine to tRNA(Ala) in a two-step reaction: alanine is first activated by ATP to form Ala-AMP and then transferred to the acceptor end of tRNA(Ala). Also edits incorrectly charged Ser-tRNA(Ala) and Gly-tRNA(Ala) via its editing domain. This Chromobacterium violaceum (strain ATCC 12472 / DSM 30191 / JCM 1249 / CCUG 213 / NBRC 12614 / NCIMB 9131 / NCTC 9757 / MK) protein is Alanine--tRNA ligase.